Consider the following 165-residue polypeptide: Peptide methionine sulfoxide reductase MsrA (165 aa).

The active site involves Cys10.

Belongs to the MsrA Met sulfoxide reductase family.

The enzyme catalyses L-methionyl-[protein] + [thioredoxin]-disulfide + H2O = L-methionyl-(S)-S-oxide-[protein] + [thioredoxin]-dithiol. The catalysed reaction is [thioredoxin]-disulfide + L-methionine + H2O = L-methionine (S)-S-oxide + [thioredoxin]-dithiol. Has an important function as a repair enzyme for proteins that have been inactivated by oxidation. Catalyzes the reversible oxidation-reduction of methionine sulfoxide in proteins to methionine. The sequence is that of Peptide methionine sulfoxide reductase MsrA from Campylobacter jejuni subsp. jejuni serotype O:6 (strain 81116 / NCTC 11828).